We begin with the raw amino-acid sequence, 1292 residues long: Zinc finger CCCH domain-containing protein 44 (1292 aa).

Residues 1–10 (MENQQKQLQQ) are compositionally biased toward polar residues. 2 disordered regions span residues 1–24 (MENQ…REES) and 72–107 (IDEA…KKED). Residues 110–176 (EDVCFICFDG…SYMCYTCTFS (67 aa)) form a PHD-type zinc finger. Disordered stretches follow at residues 256-313 (PWKE…LKKA) and 401-426 (KGAK…VHDP). The SWIB/MDM2 domain maps to 313–396 (APGDTSWATK…LKLLESHVLI (84 aa)). Polar residues predominate over residues 404 to 414 (KTTNGETTHAV). The Plus3 domain occupies 453 to 586 (AIDVHNINLI…TAATLQAMRI (134 aa)). Disordered regions lie at residues 624–731 (PEVH…TQGP), 777–832 (TTLP…SNDP), 876–915 (DVRE…INGS), and 1170–1245 (TTVE…HNNR). Low complexity predominate over residues 661–675 (QNKGVNLNNVGNNVQ). The span at 689–698 (VHADKDDCSK) shows a compositional bias: basic and acidic residues. Residues 699–708 (VHNNSSNIQE) are compositionally biased toward polar residues. The region spanning 716–770 (SEIWHYRDPTGKTQGPFSMVQLRRWKSSGHFPPYLRIWRAHENQDESVLLTDALA) is the GYF domain. Residues 813 to 829 (VNTSATSSSSSTVTAHS) show a composition bias toward low complexity. Polar residues-rich tracts occupy residues 882 to 899 (GTDQ…NTTK) and 906 to 915 (NGGSVSINGS). 2 stretches are compositionally biased toward low complexity: residues 1188-1206 (SSEP…SARG) and 1231-1244 (NNGH…SHNN). The C3H1-type zinc-finger motif lies at 1267-1292 (PKGLKICKFYESGYCKRGASCSFWHP).

The sequence is that of Zinc finger CCCH domain-containing protein 44 from Arabidopsis thaliana (Mouse-ear cress).